Reading from the N-terminus, the 207-residue chain is Large ribosomal subunit protein uL4 (207 aa).

Residues 49–78 (HAVKNRSAVSGGGRKPWRQKGTGRARQGSI) form a disordered region.

It belongs to the universal ribosomal protein uL4 family. In terms of assembly, part of the 50S ribosomal subunit.

Its function is as follows. One of the primary rRNA binding proteins, this protein initially binds near the 5'-end of the 23S rRNA. It is important during the early stages of 50S assembly. It makes multiple contacts with different domains of the 23S rRNA in the assembled 50S subunit and ribosome. In terms of biological role, forms part of the polypeptide exit tunnel. The protein is Large ribosomal subunit protein uL4 of Streptococcus uberis (strain ATCC BAA-854 / 0140J).